A 262-amino-acid polypeptide reads, in one-letter code: Small ribosomal subunit protein eS4B (262 aa).

One can recognise an S4 RNA-binding domain in the interval 42-105 (LPLIVFLRNR…GEHFRLVYDI (64 aa)). Position 223 is a phosphoserine (S223).

It belongs to the eukaryotic ribosomal protein eS4 family. In terms of assembly, component of the small ribosomal subunit (SSU). Mature yeast ribosomes consist of a small (40S) and a large (60S) subunit. The 40S small subunit contains 1 molecule of ribosomal RNA (18S rRNA) and at least 33 different proteins. The large 60S subunit contains 3 rRNA molecules (25S, 5.8S and 5S rRNA) and at least 46 different proteins.

It is found in the cytoplasm. The protein resides in the nucleus. It localises to the nucleolus. Functionally, component of the ribosome, a large ribonucleoprotein complex responsible for the synthesis of proteins in the cell. The small ribosomal subunit (SSU) binds messenger RNAs (mRNAs) and translates the encoded message by selecting cognate aminoacyl-transfer RNA (tRNA) molecules. The large subunit (LSU) contains the ribosomal catalytic site termed the peptidyl transferase center (PTC), which catalyzes the formation of peptide bonds, thereby polymerizing the amino acids delivered by tRNAs into a polypeptide chain. The nascent polypeptides leave the ribosome through a tunnel in the LSU and interact with protein factors that function in enzymatic processing, targeting, and the membrane insertion of nascent chains at the exit of the ribosomal tunnel. In Schizosaccharomyces pombe (strain 972 / ATCC 24843) (Fission yeast), this protein is Small ribosomal subunit protein eS4B (rps402).